Consider the following 354-residue polypeptide: Selenide, water dikinase (354 aa).

Cys23 is a catalytic residue. ATP is bound by residues Lys26 and 54–56 (TSD). Asp57 contacts Mg(2+). ATP contacts are provided by residues Asp74, Asp97, and 145-147 (GHS). Asp97 contributes to the Mg(2+) binding site. Asp233 is a binding site for Mg(2+).

This sequence belongs to the selenophosphate synthase 1 family. Class I subfamily. As to quaternary structure, homodimer. Mg(2+) serves as cofactor.

It carries out the reaction hydrogenselenide + ATP + H2O = selenophosphate + AMP + phosphate + 2 H(+). Synthesizes selenophosphate from selenide and ATP. In Burkholderia cenocepacia (strain ATCC BAA-245 / DSM 16553 / LMG 16656 / NCTC 13227 / J2315 / CF5610) (Burkholderia cepacia (strain J2315)), this protein is Selenide, water dikinase.